The primary structure comprises 137 residues: Large ribosomal subunit protein uL16 (137 aa).

Over residues 1–14 (MLQPNRRKFRKEHK) the composition is skewed to basic residues. The interval 1–22 (MLQPNRRKFRKEHKGRNEGLAT) is disordered.

Belongs to the universal ribosomal protein uL16 family. As to quaternary structure, part of the 50S ribosomal subunit.

Functionally, binds 23S rRNA and is also seen to make contacts with the A and possibly P site tRNAs. The sequence is that of Large ribosomal subunit protein uL16 from Dechloromonas aromatica (strain RCB).